Consider the following 80-residue polypeptide: Exodeoxyribonuclease 7 small subunit (80 aa).

The protein belongs to the XseB family. In terms of assembly, heterooligomer composed of large and small subunits.

Its subcellular location is the cytoplasm. It catalyses the reaction Exonucleolytic cleavage in either 5'- to 3'- or 3'- to 5'-direction to yield nucleoside 5'-phosphates.. Functionally, bidirectionally degrades single-stranded DNA into large acid-insoluble oligonucleotides, which are then degraded further into small acid-soluble oligonucleotides. This Vibrio parahaemolyticus serotype O3:K6 (strain RIMD 2210633) protein is Exodeoxyribonuclease 7 small subunit.